Consider the following 309-residue polypeptide: uncharacterized protein (309 aa).

This is an uncharacterized protein from Aquifex aeolicus (strain VF5).